A 207-amino-acid chain; its full sequence is Carbonic anhydrase 2 (207 aa).

Zn(2+)-binding residues include Cys-51, Asp-53, His-104, and Cys-107.

It belongs to the beta-class carbonic anhydrase family. Zn(2+) is required as a cofactor.

The enzyme catalyses hydrogencarbonate + H(+) = CO2 + H2O. Its function is as follows. Catalyzes the reversible hydration of carbon dioxide to form bicarbonate. In Mycobacterium tuberculosis (strain CDC 1551 / Oshkosh), this protein is Carbonic anhydrase 2 (mtcA2).